The following is a 499-amino-acid chain: DAZ protein 1 (499 aa).

The disordered stretch occupies residues 1-29 (MMSPPLRYQKDQQNQQHQQNQSQQAAHQM). The segment covering 12–28 (QQNQQHQQNQSQQAAHQ) has biased composition (low complexity). One can recognise an RRM domain in the interval 66-144 (PNRIFVGGFP…SRKLNLGPAI (79 aa)). Over residues 195-224 (FVYPPLRSQDQSRQQSEQQTTPQNSPTNLQ) the composition is skewed to low complexity. 2 disordered regions span residues 195–304 (FVYP…NNGG) and 406–499 (YPGN…TKNN). A DAZ domain is found at 214–236 (TTPQNSPTNLQHQQSPQVFFGGD). Basic and acidic residues predominate over residues 251–262 (EKSEVSPEKHES). Residues 263–279 (VSPQPLLPNQNVLNTQY) are compositionally biased toward polar residues. The span at 280-304 (SQGQQQWNSNVQQQQQQQMDSNNGG) shows a compositional bias: low complexity. The segment covering 406–425 (YPGNFSQQHTMGNNENTFSL) has biased composition (polar residues). Basic and acidic residues predominate over residues 438–447 (KPSECQDKKT). The segment covering 480 to 499 (LSPLSASLQSLAISSPTKNN) has biased composition (low complexity).

It belongs to the RRM DAZ family. As to expression, germline specific. More strongly expressed during oogenesis than during spermatogenesis. During the larval stages, it is more abundant at the distal region than the proximal region of the gonad. In young adult hermaphrodites, it is expressed at a very low level in the distal mitotic region of the gonad, and begins to accumulate in the meiotic transition zone. Highly expressed in the proximal pachytene region. Not expressed in mature oocytes. Not expressed in the spermatheca. Weakly or not expressed in the germline of adult males.

RNA-binding protein that plays a central role in oogenesis, but not for spermatogenesis. Required for meiotic entry and germline differentiation, at the pachytene stage of meiosis I of female germline regardless of the sex of the soma. May act by regulating translation of specific mRNAs, possibly by binding to their 3'-UTR. In Caenorhabditis elegans, this protein is DAZ protein 1 (daz-1).